The primary structure comprises 215 residues: Pyrophosphatase PpaX (215 aa).

The active-site Nucleophile is aspartate 9.

The protein belongs to the HAD-like hydrolase superfamily. PpaX family. Mg(2+) is required as a cofactor.

It catalyses the reaction diphosphate + H2O = 2 phosphate + H(+). Its function is as follows. Hydrolyzes pyrophosphate formed during P-Ser-HPr dephosphorylation by HPrK/P. Might play a role in controlling the intracellular pyrophosphate pool. In Anoxybacillus flavithermus (strain DSM 21510 / WK1), this protein is Pyrophosphatase PpaX.